A 378-amino-acid polypeptide reads, in one-letter code: Cyclic GMP-AMP synthase-like receptor 1 (378 aa).

The Mg(2+) site is built by Glu-71, Asp-73, and Asp-187. Glu-71–Asp-73 lines the ATP pocket. GTP-binding positions include Asp-187 and Thr-233–Glu-240. ATP-binding positions include Tyr-237 to Glu-240, Lys-258, and Ser-271 to Lys-275.

Belongs to the mab-21 family. The cofactor is Mg(2+). Requires Mn(2+) as cofactor.

The catalysed reaction is GTP + ATP = 3',2'-cGAMP + 2 diphosphate. It carries out the reaction GTP + ATP = pppA(2'-5')pG + diphosphate. It catalyses the reaction pppA(2'-5')pG = 3',2'-cGAMP + diphosphate. With respect to regulation, the enzyme activity is specifically activated by double-stranded RNA (dsRNA). Recognizes long dsRNA (&gt;30 bp) with no preference for 5' RNA phosphorylation. Nucleotidyltransferase that catalyzes the formation of cyclic GMP-AMP (3',2'-cGAMP) from ATP and GTP and plays a key role in antiviral innate immunity. Synthesizes 3',2'-cGAMP in a two-step reaction through production of the linear intermediate pppA(2'-5')pG. Acts as a key sensor of double-stranded RNA (dsRNA), the presence of dsRNA in the cytoplasm being a danger signal that triggers the immune responses. Directly binds dsRNA, activating the nucleotidyltransferase activity, leading to synthesis of 3',2'-cGAMP, a second messenger that binds to and activates Sting, thereby triggering the antiviral immune response via activation of the NF-kappa-B transcription factor Rel (Relish). 3',2'-cGAMP is protected from poxin cleavage. This Drosophila melanogaster (Fruit fly) protein is Cyclic GMP-AMP synthase-like receptor 1.